Reading from the N-terminus, the 536-residue chain is C-22 sterol desaturase ERG5A (536 aa).

The helical transmembrane segment at 41–61 threads the bilayer; that stretch reads VWTWVFTLVALCIAYDQIAYI. Cysteine 481 is a heme binding site.

The protein belongs to the cytochrome P450 family. The cofactor is heme.

The protein localises to the endoplasmic reticulum membrane. It catalyses the reaction 5-dehydroepisterol + NADPH + O2 + H(+) = ergosta-5,7,22,24(28)-tetraen-3beta-ol + NADP(+) + 2 H2O. The protein operates within steroid metabolism; ergosterol biosynthesis. In terms of biological role, C-22 sterol desaturase; part of the third module of ergosterol biosynthesis pathway that includes the late steps of the pathway. ERG5A and ERG5B convert 5-dehydroepisterol into ergosta-5,7,22,24(28)-tetraen-3beta-ol by forming the C-22(23) double bond in the sterol side chain. The third module or late pathway involves the ergosterol synthesis itself through consecutive reactions that mainly occur in the endoplasmic reticulum (ER) membrane. Firstly, the squalene synthase ERG9 catalyzes the condensation of 2 farnesyl pyrophosphate moieties to form squalene, which is the precursor of all steroids. Squalene synthase is crucial for balancing the incorporation of farnesyl diphosphate (FPP) into sterol and nonsterol isoprene synthesis. Secondly, squalene is converted into lanosterol by the consecutive action of the squalene epoxidase ERG1 and the lanosterol synthase ERG7. Then, the delta(24)-sterol C-methyltransferase ERG6 methylates lanosterol at C-24 to produce eburicol. Eburicol is the substrate of the sterol 14-alpha demethylase encoded by CYP51A, CYP51B and CYP51C, to yield 4,4,24-trimethyl ergosta-8,14,24(28)-trienol. CYP51B encodes the enzyme primarily responsible for sterol 14-alpha-demethylation, and plays an essential role in ascospore formation. CYP51A encodes an additional sterol 14-alpha-demethylase, induced on ergosterol depletion and responsible for the intrinsic variation in azole sensitivity. The third CYP51 isoform, CYP51C, does not encode a sterol 14-alpha-demethylase, but is required for full virulence on host wheat ears. The C-14 reductase ERG24 then reduces the C14=C15 double bond which leads to 4,4-dimethylfecosterol. A sequence of further demethylations at C-4, involving the C-4 demethylation complex containing the C-4 methylsterol oxidases ERG25, the sterol-4-alpha-carboxylate 3-dehydrogenase ERG26 and the 3-keto-steroid reductase ERG27, leads to the production of fecosterol via 4-methylfecosterol. ERG28 has a role as a scaffold to help anchor ERG25, ERG26 and ERG27 to the endoplasmic reticulum. The C-8 sterol isomerase ERG2 then catalyzes the reaction which results in unsaturation at C-7 in the B ring of sterols and thus converts fecosterol to episterol. The sterol-C5-desaturases ERG3A and ERG3BB then catalyze the introduction of a C-5 double bond in the B ring to produce 5-dehydroepisterol. The C-22 sterol desaturases ERG5A and ERG5B further convert 5-dehydroepisterol into ergosta-5,7,22,24(28)-tetraen-3beta-ol by forming the C-22(23) double bond in the sterol side chain. Finally, ergosta-5,7,22,24(28)-tetraen-3beta-ol is substrate of the C-24(28) sterol reductase ERG4 to produce ergosterol. The polypeptide is C-22 sterol desaturase ERG5A (Gibberella zeae (strain ATCC MYA-4620 / CBS 123657 / FGSC 9075 / NRRL 31084 / PH-1) (Wheat head blight fungus)).